Reading from the N-terminus, the 465-residue chain is Siroheme synthase (465 aa).

The precorrin-2 dehydrogenase /sirohydrochlorin ferrochelatase stretch occupies residues 1–203 (MDFLPLFHSL…GRPAEAERLL (203 aa)). Residues 22–23 (EV) and 43–44 (PQ) each bind NAD(+). Ser128 carries the post-translational modification Phosphoserine. The uroporphyrinogen-III C-methyltransferase stretch occupies residues 217 to 465 (GEVYLVGAGP…AWFEGAREGA (249 aa)). An S-adenosyl-L-methionine-binding site is contributed by Pro226. Catalysis depends on Asp249, which acts as the Proton acceptor. The active-site Proton donor is Lys271. S-adenosyl-L-methionine is bound by residues 302–304 (GGD), Ile307, 332–333 (TA), Met384, and Gly413.

It in the N-terminal section; belongs to the precorrin-2 dehydrogenase / sirohydrochlorin ferrochelatase family. This sequence in the C-terminal section; belongs to the precorrin methyltransferase family.

The enzyme catalyses uroporphyrinogen III + 2 S-adenosyl-L-methionine = precorrin-2 + 2 S-adenosyl-L-homocysteine + H(+). The catalysed reaction is precorrin-2 + NAD(+) = sirohydrochlorin + NADH + 2 H(+). It catalyses the reaction siroheme + 2 H(+) = sirohydrochlorin + Fe(2+). It functions in the pathway cofactor biosynthesis; adenosylcobalamin biosynthesis; precorrin-2 from uroporphyrinogen III: step 1/1. It participates in cofactor biosynthesis; adenosylcobalamin biosynthesis; sirohydrochlorin from precorrin-2: step 1/1. The protein operates within porphyrin-containing compound metabolism; siroheme biosynthesis; precorrin-2 from uroporphyrinogen III: step 1/1. Its pathway is porphyrin-containing compound metabolism; siroheme biosynthesis; siroheme from sirohydrochlorin: step 1/1. It functions in the pathway porphyrin-containing compound metabolism; siroheme biosynthesis; sirohydrochlorin from precorrin-2: step 1/1. Multifunctional enzyme that catalyzes the SAM-dependent methylations of uroporphyrinogen III at position C-2 and C-7 to form precorrin-2 via precorrin-1. Then it catalyzes the NAD-dependent ring dehydrogenation of precorrin-2 to yield sirohydrochlorin. Finally, it catalyzes the ferrochelation of sirohydrochlorin to yield siroheme. In Pseudomonas paraeruginosa (strain DSM 24068 / PA7) (Pseudomonas aeruginosa (strain PA7)), this protein is Siroheme synthase.